The sequence spans 629 residues: Dehydrogenase pyvF (629 aa).

Positions 1–22 (MAGSPFTTALLSAWTLSTVAVG) are cleaved as a signal peptide. FAD contacts are provided by residues 61 to 62 (AS) and 82 to 83 (EA). A glycan (N-linked (GlcNAc...) asparagine) is linked at asparagine 92. 144–147 (NLMA) serves as a coordination point for FAD. Residues asparagine 172, asparagine 182, asparagine 256, asparagine 284, asparagine 312, and asparagine 421 are each glycosylated (N-linked (GlcNAc...) asparagine). The active-site Proton acceptor is the histidine 552. Residues alanine 586 and 597 to 598 (PL) contribute to the FAD site.

This sequence belongs to the GMC oxidoreductase family. As to quaternary structure, homodimer. It depends on FAD as a cofactor.

Its pathway is secondary metabolite biosynthesis. Its function is as follows. Dehydrogenase; part of the gene cluster that mediates the biosynthesis of pyranoviolin A, a pyranonigrin analog with a C-3 methoxy group. Initially, the PKS portion of pyvA synthesizes C-10 carbon chain from 5 molecules of malonyl-CoA, which is then condensed with the thiolation (T) domain-bound glycine activated by the adenylation (A) domain. The subsequent chain release by Dieckmann condensation (DKC) could be catalyzed by the TE domain present at the C-terminus of pyvA and/or the alpha/beta hydrolase pyvD, installing the tetramic acid moiety. The FAD-dependent monooxygenase pyvC next epoxidizes one of the olefins of the polyketide part, and the epoxide ring-opening induces the dihydro-gamma-pyrone ring formation. The cytochrome P450 monooxygeanse pyvB would be responsible for the 2 consecutive reactions, in which the dihydro-gamma-pyrone is oxidized to gamma-pyrone and C-7 is hydroxylated to yield pyranonigrin F. Finally, the O-methyltransferase pyvH methylates the C-3 hydroxy group to complete the biosynthesis. The sequence is that of Dehydrogenase pyvF from Aspergillus violaceofuscus (strain CBS 115571).